Here is a 1798-residue protein sequence, read N- to C-terminus: Focadhesin (1798 aa).

Position 816 is an N6-acetyllysine (Lys-816).

Interacts with VCL. Expressed by glial and neuronal cells in brain.

Its subcellular location is the cell junction. The protein localises to the focal adhesion. It localises to the cytoplasm. It is found in the cytosol. Required for the maintenance of SKIC2 and SKIC3 proteostatic levels in the liver. May be involved in the regulation of RNA degradation by the exosome complex. Potential tumor suppressor in gliomas. The sequence is that of Focadhesin (Focad) from Mus musculus (Mouse).